The sequence spans 61 residues: Small ribosomal subunit protein uS14 (61 aa).

4 residues coordinate Zn(2+): Cys24, Cys27, Cys40, and Cys43.

Belongs to the universal ribosomal protein uS14 family. Zinc-binding uS14 subfamily. In terms of assembly, part of the 30S ribosomal subunit. Contacts proteins S3 and S10. Zn(2+) serves as cofactor.

Functionally, binds 16S rRNA, required for the assembly of 30S particles and may also be responsible for determining the conformation of the 16S rRNA at the A site. This is Small ribosomal subunit protein uS14 from Dictyoglomus thermophilum (strain ATCC 35947 / DSM 3960 / H-6-12).